Here is a 215-residue protein sequence, read N- to C-terminus: Pyridoxine/pyridoxamine 5'-phosphate oxidase (215 aa).

Substrate is bound by residues 9-12 (RRDY) and lysine 69. FMN contacts are provided by residues 64-69 (RILLLK), 79-80 (FT), lysine 86, and glutamine 108. 3 residues coordinate substrate: tyrosine 126, arginine 130, and serine 134. Residues 143 to 144 (QS) and tryptophan 188 contribute to the FMN site. 194–196 (RLH) lines the substrate pocket. Position 198 (arginine 198) interacts with FMN.

This sequence belongs to the pyridoxamine 5'-phosphate oxidase family. In terms of assembly, homodimer. Requires FMN as cofactor.

The enzyme catalyses pyridoxamine 5'-phosphate + O2 + H2O = pyridoxal 5'-phosphate + H2O2 + NH4(+). The catalysed reaction is pyridoxine 5'-phosphate + O2 = pyridoxal 5'-phosphate + H2O2. It participates in cofactor metabolism; pyridoxal 5'-phosphate salvage; pyridoxal 5'-phosphate from pyridoxamine 5'-phosphate: step 1/1. It functions in the pathway cofactor metabolism; pyridoxal 5'-phosphate salvage; pyridoxal 5'-phosphate from pyridoxine 5'-phosphate: step 1/1. In terms of biological role, catalyzes the oxidation of either pyridoxine 5'-phosphate (PNP) or pyridoxamine 5'-phosphate (PMP) into pyridoxal 5'-phosphate (PLP). This chain is Pyridoxine/pyridoxamine 5'-phosphate oxidase, found in Pseudomonas fluorescens (strain SBW25).